A 456-amino-acid polypeptide reads, in one-letter code: Proline-specific permease ProY (456 aa).

The Cytoplasmic segment spans residues 1-17 (MESNNKLKRGLSTRHIR). 2 helical membrane-spanning segments follow: residues 18–38 (FMAL…DAIK) and 39–59 (MAGP…YIIM). Over 60-95 (RALGEMSVHNPAASSFSRYAQENLGPLAGYITGWTY) the chain is Cytoplasmic. The next 2 membrane-spanning stretches (helical) occupy residues 96–116 (CFEI…YMGV) and 117–137 (WFPA…ICAI). Topologically, residues 138 to 156 (NLMSVKVFGELEFWFSFFK) are cytoplasmic. A helical transmembrane segment spans residues 157 to 177 (VATIIIMIVAGIGIIVWGIGN). Topologically, residues 178–197 (GGQPTGIHNLWSNGGFFSNG) are periplasmic. The chain crosses the membrane as a helical span at residues 198–218 (WLGMIMSLQMVMFAYGGIEII). Topologically, residues 219–242 (GITAGEAKDPEKSIPRAINSVPMR) are cytoplasmic. Residues 243-263 (ILVFYVGTLFVIMSIYPWNQV) traverse the membrane as a helical segment. The Periplasmic portion of the chain corresponds to 264–277 (GTNGSPFVLTFQHM). Residues 278 to 298 (GITFAASILNFVVLTASLSAI) traverse the membrane as a helical segment. At 299-331 (NSDVFGVGRMLHGMAEQGSAPKVFAKTSRRGIP) the chain is on the cytoplasmic side. A helical transmembrane segment spans residues 332–352 (WVTVLVMTIALLFAVYLNYIM). At 353–355 (PEN) the chain is on the periplasmic side. Residues 356-376 (VFLVIASLATFATVWVWIMIL) form a helical membrane-spanning segment. The Cytoplasmic segment spans residues 377–399 (LSQIAFRRRLPPEEVKALKFKVP). A helical transmembrane segment spans residues 400-420 (GGVVTTIAGLIFLVFIIALIG). Residues 421–424 (YHPD) are Periplasmic-facing. Residues 425 to 445 (TRISLYVGFAWIVLLLIGWIF) traverse the membrane as a helical segment. At 446 to 456 (KRRRDRQLAQA) the chain is on the cytoplasmic side.

Belongs to the amino acid-polyamine-organocation (APC) superfamily. Amino acid transporter (AAT) (TC 2.A.3.1) family.

The protein resides in the cell inner membrane. Its function is as follows. Permease that is involved in the transport across the cytoplasmic membrane of proline. The protein is Proline-specific permease ProY (proY) of Salmonella typhimurium (strain LT2 / SGSC1412 / ATCC 700720).